Consider the following 424-residue polypeptide: Histidine--tRNA ligase (424 aa).

It belongs to the class-II aminoacyl-tRNA synthetase family. As to quaternary structure, homodimer.

The protein resides in the cytoplasm. The enzyme catalyses tRNA(His) + L-histidine + ATP = L-histidyl-tRNA(His) + AMP + diphosphate + H(+). This is Histidine--tRNA ligase from Shewanella halifaxensis (strain HAW-EB4).